The primary structure comprises 431 residues: Enolase (431 aa).

Q167 lines the (2R)-2-phosphoglycerate pocket. Catalysis depends on E209, which acts as the Proton donor. Positions 246, 290, and 317 each coordinate Mg(2+). (2R)-2-phosphoglycerate is bound by residues K342, R371, S372, and K393. The Proton acceptor role is filled by K342.

This sequence belongs to the enolase family. Component of the RNA degradosome, a multiprotein complex involved in RNA processing and mRNA degradation. Mg(2+) is required as a cofactor.

It localises to the cytoplasm. The protein localises to the secreted. Its subcellular location is the cell surface. It catalyses the reaction (2R)-2-phosphoglycerate = phosphoenolpyruvate + H2O. Its pathway is carbohydrate degradation; glycolysis; pyruvate from D-glyceraldehyde 3-phosphate: step 4/5. In terms of biological role, catalyzes the reversible conversion of 2-phosphoglycerate (2-PG) into phosphoenolpyruvate (PEP). It is essential for the degradation of carbohydrates via glycolysis. This Serratia proteamaculans (strain 568) protein is Enolase.